Consider the following 741-residue polypeptide: Cellulose 1,4-beta-cellobiosidase (reducing end) CelS (741 aa).

The first 27 residues, 1–27, serve as a signal peptide directing secretion; it reads MVKSRKISILLAVAMLVSIMIPTTAFA. Glu76 serves as a coordination point for substrate. The active-site Proton donor is the Glu87. Substrate-binding positions include Thr140, Asn204, Asp241, Gln247, and 251-252; that span reads TN. Asp255 acts as the Nucleophile in catalysis. Substrate is bound by residues 301 to 302, 326 to 327, Tyr421, Asp520, and 645 to 646; these read KY, WY, and WH. A Dockerin domain is found at 673–739; the sequence is STKLYGDVND…ILKEIDTLPY (67 aa). Positions 679, 681, 683, 684, 685, 690, 711, 712, 713, 715, 717, and 722 each coordinate Ca(2+).

The protein belongs to the glycosyl hydrolase 48 (cellulase L) family.

It is found in the secreted. It carries out the reaction Hydrolysis of (1-&gt;4)-beta-D-glucosidic linkages in cellulose and similar substrates, releasing cellobiose from the reducing ends of the chains.. With respect to regulation, inhibited by cellobiose and lactose, but not by glucose. In terms of biological role, this enzyme catalyzes the exohydrolysis of 1,4-beta-glucosidic linkages in cellulose with a preference for amorphous or crystalline cellulose over carboxymethyl cellulose. The chain is Cellulose 1,4-beta-cellobiosidase (reducing end) CelS (celS) from Acetivibrio thermocellus (strain ATCC 27405 / DSM 1237 / JCM 9322 / NBRC 103400 / NCIMB 10682 / NRRL B-4536 / VPI 7372) (Clostridium thermocellum).